Consider the following 588-residue polypeptide: UDP-N-acetylmuramate--L-alanine ligase (588 aa).

ATP is bound at residue 119 to 125; the sequence is GSHGKST. Residues 344-371 are compositionally biased toward low complexity; it reads VPAAAGAAAAPPVRRDPATAAAAATTAP. The segment at 344 to 411 is disordered; that stretch reads VPAAAGAAAA…APAAGPDHAA (68 aa). A compositionally biased stretch (pro residues) spans 372–381; the sequence is IGPPDSPPPT. Over residues 382–411 the composition is skewed to low complexity; the sequence is GIALPRAAPPAVDAPVAATPAPAAGPDHAA.

This sequence belongs to the MurCDEF family.

The protein localises to the cytoplasm. It catalyses the reaction UDP-N-acetyl-alpha-D-muramate + L-alanine + ATP = UDP-N-acetyl-alpha-D-muramoyl-L-alanine + ADP + phosphate + H(+). The protein operates within cell wall biogenesis; peptidoglycan biosynthesis. Functionally, cell wall formation. The sequence is that of UDP-N-acetylmuramate--L-alanine ligase from Frankia alni (strain DSM 45986 / CECT 9034 / ACN14a).